The following is a 323-amino-acid chain: Fructose-1,6-bisphosphatase class 1 (323 aa).

4 residues coordinate Mg(2+): E84, D103, L105, and D106. Substrate-binding positions include 106 to 109 (DGSS), N198, and K264. E270 contacts Mg(2+).

This sequence belongs to the FBPase class 1 family. As to quaternary structure, homotetramer. It depends on Mg(2+) as a cofactor.

The protein localises to the cytoplasm. The catalysed reaction is beta-D-fructose 1,6-bisphosphate + H2O = beta-D-fructose 6-phosphate + phosphate. Its pathway is carbohydrate biosynthesis; gluconeogenesis. The polypeptide is Fructose-1,6-bisphosphatase class 1 (Pseudoalteromonas atlantica (strain T6c / ATCC BAA-1087)).